Reading from the N-terminus, the 252-residue chain is Protein IRON-RELATED TRANSCRIPTION FACTOR 3 (252 aa).

The interval 36-49 (PRKVHKSEREKLKR) is basic motif. Positions 36–86 (PRKVHKSEREKLKRGHLNDLFGELGNMLEADRQSNGKACILTDTTRILRDL) constitute a bHLH domain. The segment at 50-86 (GHLNDLFGELGNMLEADRQSNGKACILTDTTRILRDL) is helix-loop-helix motif. Positions 76 to 131 (LTDTTRILRDLLSQVKSLRQENSTLQNESNYVTMERNELQDENGALRSEISDLQNE) form a coiled coil. The segment at 135 to 252 (RATGSPGWGH…GLPRMEDEQM (118 aa)) is disordered. Residues 162–176 (PSQQPMQPSPMTTST) show a composition bias toward low complexity. Positions 208–219 (PAEDPEPSEDQE) are enriched in acidic residues.

The protein belongs to the bHLH protein family.

It localises to the nucleus. Transcription factor that acts as a negative regulator of the iron deficiency response. Suppresses the induction of iron deficiency responsive genes, such as NAS1, NAS2, IRO2, IRT1, YSL15, and NRAMP1. The sequence is that of Protein IRON-RELATED TRANSCRIPTION FACTOR 3 from Oryza sativa subsp. japonica (Rice).